Consider the following 433-residue polypeptide: Enolase (433 aa).

Residue Q163 participates in (2R)-2-phosphoglycerate binding. The active-site Proton donor is E205. D242, E286, and D313 together coordinate Mg(2+). Residues K338, R367, S368, and K389 each coordinate (2R)-2-phosphoglycerate. The active-site Proton acceptor is the K338.

This sequence belongs to the enolase family. The cofactor is Mg(2+).

The protein resides in the cytoplasm. It localises to the secreted. Its subcellular location is the cell surface. The catalysed reaction is (2R)-2-phosphoglycerate = phosphoenolpyruvate + H2O. It participates in carbohydrate degradation; glycolysis; pyruvate from D-glyceraldehyde 3-phosphate: step 4/5. Functionally, catalyzes the reversible conversion of 2-phosphoglycerate (2-PG) into phosphoenolpyruvate (PEP). It is essential for the degradation of carbohydrates via glycolysis. This chain is Enolase, found in Koribacter versatilis (strain Ellin345).